Here is a 203-residue protein sequence, read N- to C-terminus: Nucleoside triphosphate pyrophosphatase (203 aa).

Aspartate 78 acts as the Proton acceptor in catalysis.

This sequence belongs to the Maf family. Requires a divalent metal cation as cofactor.

Its subcellular location is the cytoplasm. The enzyme catalyses a ribonucleoside 5'-triphosphate + H2O = a ribonucleoside 5'-phosphate + diphosphate + H(+). It carries out the reaction a 2'-deoxyribonucleoside 5'-triphosphate + H2O = a 2'-deoxyribonucleoside 5'-phosphate + diphosphate + H(+). Its function is as follows. Nucleoside triphosphate pyrophosphatase. May have a dual role in cell division arrest and in preventing the incorporation of modified nucleotides into cellular nucleic acids. The sequence is that of Nucleoside triphosphate pyrophosphatase from Prochlorococcus marinus (strain MIT 9301).